The following is an 83-amino-acid chain: Neurotoxin 3FTx-RI (83 aa).

An N-terminal signal peptide occupies residues 1–21 (MKTLLLTLVVLTIVCLDLGHT). 4 disulfides stabilise this stretch: cysteine 24–cysteine 45, cysteine 38–cysteine 62, cysteine 64–cysteine 75, and cysteine 76–cysteine 81.

It belongs to the three-finger toxin family. Short-chain subfamily. Type I alpha-neurotoxin sub-subfamily. Expressed by the venom gland.

Its subcellular location is the secreted. In terms of biological role, binds to muscle nicotinic acetylcholine receptor (nAChR) and inhibit acetylcholine from binding to the receptor, thereby impairing neuromuscular transmission. The chain is Neurotoxin 3FTx-RI from Bungarus fasciatus (Banded krait).